We begin with the raw amino-acid sequence, 890 residues long: DNA mismatch repair protein MutS (890 aa).

Position 645-652 (G645–S652) interacts with ATP.

The protein belongs to the DNA mismatch repair MutS family.

In terms of biological role, this protein is involved in the repair of mismatches in DNA. It is possible that it carries out the mismatch recognition step. This protein has a weak ATPase activity. The protein is DNA mismatch repair protein MutS of Rickettsia africae (strain ESF-5).